The following is a 134-amino-acid chain: ATP synthase epsilon chain (134 aa).

It belongs to the ATPase epsilon chain family. F-type ATPases have 2 components, CF(1) - the catalytic core - and CF(0) - the membrane proton channel. CF(1) has five subunits: alpha(3), beta(3), gamma(1), delta(1), epsilon(1). CF(0) has three main subunits: a, b and c.

It is found in the cell inner membrane. In terms of biological role, produces ATP from ADP in the presence of a proton gradient across the membrane. This is ATP synthase epsilon chain from Sinorhizobium medicae (strain WSM419) (Ensifer medicae).